The sequence spans 389 residues: Chalcone synthase 1 (389 aa).

Cys164 is an active-site residue.

Belongs to the thiolase-like superfamily. Chalcone/stilbene synthases family.

It catalyses the reaction (E)-4-coumaroyl-CoA + 3 malonyl-CoA + 3 H(+) = 2',4,4',6'-tetrahydroxychalcone + 3 CO2 + 4 CoA. The protein operates within secondary metabolite biosynthesis; flavonoid biosynthesis. In terms of biological role, the primary product of this enzyme is 4,2',4',6'-tetrahydroxychalcone (also termed naringenin-chalcone or chalcone) which can under specific conditions spontaneously isomerize into naringenin. This Solanum lycopersicum (Tomato) protein is Chalcone synthase 1 (CHS1).